A 121-amino-acid polypeptide reads, in one-letter code: NADH-ubiquinone oxidoreductase chain 3 (121 aa).

The next 3 membrane-spanning stretches (helical) occupy residues 11-31, 63-83, and 90-110; these read ILIFFAISSLLSSVIFLLSYF, FYLVAILFLIFDLEISFLFPW, and ISIIGFWSMIVFLVILTIGFI.

This sequence belongs to the complex I subunit 3 family.

The protein resides in the mitochondrion membrane. It carries out the reaction a ubiquinone + NADH + 5 H(+)(in) = a ubiquinol + NAD(+) + 4 H(+)(out). In terms of biological role, core subunit of the mitochondrial membrane respiratory chain NADH dehydrogenase (Complex I) that is believed to belong to the minimal assembly required for catalysis. Complex I functions in the transfer of electrons from NADH to the respiratory chain. The immediate electron acceptor for the enzyme is believed to be ubiquinone. This chain is NADH-ubiquinone oxidoreductase chain 3 (ND3), found in Chondrus crispus (Carrageen Irish moss).